The sequence spans 406 residues: Cysteine desulfurase (406 aa).

At Lys226 the chain carries N6-(pyridoxal phosphate)lysine. Cys364 acts as the Cysteine persulfide intermediate in catalysis.

This sequence belongs to the class-V pyridoxal-phosphate-dependent aminotransferase family. Csd subfamily. In terms of assembly, homodimer. Interacts with SufE and the SufBCD complex composed of SufB, SufC and SufD. The interaction with SufE is required to mediate the direct transfer of the sulfur atom from the S-sulfanylcysteine. Requires pyridoxal 5'-phosphate as cofactor.

The protein localises to the cytoplasm. The enzyme catalyses (sulfur carrier)-H + L-cysteine = (sulfur carrier)-SH + L-alanine. It carries out the reaction L-selenocysteine + AH2 = hydrogenselenide + L-alanine + A + H(+). Its pathway is cofactor biosynthesis; iron-sulfur cluster biosynthesis. Its function is as follows. Cysteine desulfurases mobilize the sulfur from L-cysteine to yield L-alanine, an essential step in sulfur metabolism for biosynthesis of a variety of sulfur-containing biomolecules. Component of the suf operon, which is activated and required under specific conditions such as oxidative stress and iron limitation. Acts as a potent selenocysteine lyase in vitro, that mobilizes selenium from L-selenocysteine. Selenocysteine lyase activity is however unsure in vivo. The chain is Cysteine desulfurase from Escherichia coli (strain SE11).